A 2080-amino-acid polypeptide reads, in one-letter code: Dedicator of cytokinesis protein 6 (2080 aa).

Basic and acidic residues predominate over residues Glu20–Gly31. Disordered stretches follow at residues Glu20–Gly44, Gln156–Ser189, and Pro408–Ala441. The span at Ser32–Ser42 shows a compositional bias: low complexity. At Ser178 the chain carries Phosphoserine. Over residues Pro408 to Glu425 the composition is skewed to basic and acidic residues. The 167-residue stretch at Arg546–Val712 folds into the C2 DOCK-type domain. Arg863 bears the Omega-N-methylarginine mark. Phosphoserine is present on residues Ser870, Ser878, and Ser882. Residues Ala1101 to Asp1123 form a disordered region. A compositionally biased stretch (low complexity) spans Ser1104–Pro1122. Ser1341 bears the Phosphoserine mark. Positions Arg1620–Pro2056 constitute a DOCKER domain. At Thr2064 the chain carries Phosphothreonine. A phosphoserine mark is found at Ser2065 and Ser2069.

Belongs to the DOCK family. Widely expressed with highest levels in lung and heart.

Its subcellular location is the cytoplasm. The protein resides in the perinuclear region. Acts as a guanine nucleotide exchange factor (GEF) for CDC42 and RAC1 small GTPases. Through its activation of CDC42 and RAC1, regulates neurite outgrowth in an vitro differentiation system. The chain is Dedicator of cytokinesis protein 6 (Dock6) from Mus musculus (Mouse).